Consider the following 50-residue polypeptide: uncharacterized protein (50 aa).

A helical membrane pass occupies residues 10–29; it reads LFFYYPFFIIFLYIYLVFFI.

Its subcellular location is the plastid. It is found in the chloroplast membrane. This is an uncharacterized protein from Marchantia polymorpha (Common liverwort).